The chain runs to 64 residues: Small ribosomal subunit protein bS21 (64 aa).

The interval Glu-39–Phe-64 is disordered. Residues Val-43–Phe-64 show a composition bias toward basic residues.

This sequence belongs to the bacterial ribosomal protein bS21 family.

The sequence is that of Small ribosomal subunit protein bS21 (rpsU) from Myxococcus xanthus.